We begin with the raw amino-acid sequence, 184 residues long: Ribosome maturation factor RimM (184 aa).

Positions 106–184 (PGDYYWYQLE…RMIVDWDPEF (79 aa)) constitute a PRC barrel domain.

The protein belongs to the RimM family. In terms of assembly, binds ribosomal protein uS19.

The protein localises to the cytoplasm. In terms of biological role, an accessory protein needed during the final step in the assembly of 30S ribosomal subunit, possibly for assembly of the head region. Essential for efficient processing of 16S rRNA. May be needed both before and after RbfA during the maturation of 16S rRNA. It has affinity for free ribosomal 30S subunits but not for 70S ribosomes. The polypeptide is Ribosome maturation factor RimM (Chromohalobacter salexigens (strain ATCC BAA-138 / DSM 3043 / CIP 106854 / NCIMB 13768 / 1H11)).